The primary structure comprises 332 residues: Galectin-4 (332 aa).

Galectin domains are found at residues 19–150 (YHNP…INFI) and 203–332 (FNGR…YVQI). 265 to 271 (WGSEERK) is an a beta-D-galactoside binding site. S267 is modified (phosphoserine).

As to quaternary structure, monomer.

Galectin that binds lactose and a related range of sugars. May be involved in the assembly of adherens junctions. The polypeptide is Galectin-4 (LGALS4) (Bos taurus (Bovine)).